Reading from the N-terminus, the 321-residue chain is Protein stand still (321 aa).

Coiled-coil stretches lie at residues 74 to 103 and 147 to 167; these read KLHEMKVAALEERRDRIMKNRRFAKSRKKA and KQEQEGATRKLEDSTSDKANL. Residues 146-162 show a composition bias toward basic and acidic residues; that stretch reads HKQEQEGATRKLEDSTS. Disordered regions lie at residues 146–166 and 227–248; these read HKQEQEGATRKLEDSTSDKAN and QVPPVQGESKSSGSLASSMEDV. The span at 235–244 shows a compositional bias: low complexity; it reads SKSSGSLASS. A coiled-coil region spans residues 272–292; it reads QRDVLQRLERSMAQISQELHC.

As to expression, germ cells specific. Expressed in all germ cells. During the first instar larvae, it is expressed in all germ cells of both sexes. In third instar larvae, it decreases in male germ cells while it remains in female germ cells. In adult ovary, it is expressed in cells of the germarium, including the stem cells. In the early previtellogenic stages, it is highly expressed in the nurse cells. During vitellogenesis, it is not translocated into the maturing egg. In testes, it is only expressed during some steps of male germline differentiation. At the apex testis, it is expressed at low level in stem cells and dividing spermatogonia, while in newly formed 16-cell cysts of primary spermatocytes, it is transiently but strongly expressed before vanishing during spermatocyte growth phase.

It localises to the nucleus. In terms of biological role, essential in the female germline for proper survival, sex determination and differentiation. Participates in the transcriptional activation of Otu. Does not regulate the expression of Ovo. The chain is Protein stand still (stil) from Drosophila melanogaster (Fruit fly).